Reading from the N-terminus, the 383-residue chain is Gamma-butyrobetaine dioxygenase (383 aa).

4 residues coordinate Zn(2+): cysteine 46, cysteine 48, cysteine 51, and histidine 91. Positions 209, 211, and 350 each coordinate Fe cation.

Belongs to the gamma-BBH/TMLD family. As to quaternary structure, homodimer. The cofactor is Fe(2+). L-ascorbate serves as cofactor.

The protein resides in the cytoplasm. It carries out the reaction 4-(trimethylamino)butanoate + 2-oxoglutarate + O2 = carnitine + succinate + CO2. It functions in the pathway amine and polyamine biosynthesis; carnitine biosynthesis. In terms of biological role, catalyzes the formation of L-carnitine from gamma-butyrobetaine. This chain is Gamma-butyrobetaine dioxygenase, found in Pseudomonas sp. (strain AK-1).